A 410-amino-acid chain; its full sequence is 3-phosphoshikimate 1-carboxyvinyltransferase (410 aa).

K20, S21, and R25 together coordinate 3-phosphoshikimate. K20 serves as a coordination point for phosphoenolpyruvate. Phosphoenolpyruvate is bound by residues G87 and R115. S157, S158, Q159, S183, D293, and K320 together coordinate 3-phosphoshikimate. Phosphoenolpyruvate is bound at residue Q159. The active-site Proton acceptor is the D293. Residues R324, R365, and K391 each coordinate phosphoenolpyruvate.

It belongs to the EPSP synthase family. Monomer.

The protein localises to the cytoplasm. It carries out the reaction 3-phosphoshikimate + phosphoenolpyruvate = 5-O-(1-carboxyvinyl)-3-phosphoshikimate + phosphate. It functions in the pathway metabolic intermediate biosynthesis; chorismate biosynthesis. Functionally, catalyzes the transfer of the enolpyruvyl moiety of phosphoenolpyruvate (PEP) to the 5-hydroxyl of shikimate-3-phosphate (S3P) to produce enolpyruvyl shikimate-3-phosphate and inorganic phosphate. The chain is 3-phosphoshikimate 1-carboxyvinyltransferase from Thermoplasma volcanium (strain ATCC 51530 / DSM 4299 / JCM 9571 / NBRC 15438 / GSS1).